The following is a 534-amino-acid chain: CTP synthase (534 aa).

The amidoligase domain stretch occupies residues 1–267 (MTKYIFVTGG…DQIVCDHLKL (267 aa)). Ser-13 contributes to the CTP binding site. UTP is bound at residue Ser-13. 14-19 (SIGKGI) is a binding site for ATP. Tyr-54 lines the L-glutamine pocket. Asp-71 serves as a coordination point for ATP. 2 residues coordinate Mg(2+): Asp-71 and Glu-141. Residues 148–150 (DIE), 188–193 (KTKPTQ), and Lys-224 contribute to the CTP site. UTP-binding positions include 188 to 193 (KTKPTQ) and Lys-224. 240-242 (RNV) is an ATP binding site. One can recognise a Glutamine amidotransferase type-1 domain in the interval 292 to 534 (KIALVGKYVE…FVTAAIKNSN (243 aa)). Gly-354 is an L-glutamine binding site. Cys-381 functions as the Nucleophile; for glutamine hydrolysis in the catalytic mechanism. Residues 382 to 385 (LGMQ), Glu-405, and Arg-463 contribute to the L-glutamine site. Residues His-508 and Glu-510 contribute to the active site.

This sequence belongs to the CTP synthase family. Homotetramer.

It carries out the reaction UTP + L-glutamine + ATP + H2O = CTP + L-glutamate + ADP + phosphate + 2 H(+). It catalyses the reaction L-glutamine + H2O = L-glutamate + NH4(+). The enzyme catalyses UTP + NH4(+) + ATP = CTP + ADP + phosphate + 2 H(+). It participates in pyrimidine metabolism; CTP biosynthesis via de novo pathway; CTP from UDP: step 2/2. With respect to regulation, allosterically activated by GTP, when glutamine is the substrate; GTP has no effect on the reaction when ammonia is the substrate. The allosteric effector GTP functions by stabilizing the protein conformation that binds the tetrahedral intermediate(s) formed during glutamine hydrolysis. Inhibited by the product CTP, via allosteric rather than competitive inhibition. Catalyzes the ATP-dependent amination of UTP to CTP with either L-glutamine or ammonia as the source of nitrogen. Regulates intracellular CTP levels through interactions with the four ribonucleotide triphosphates. In Streptococcus pyogenes serotype M28 (strain MGAS6180), this protein is CTP synthase.